The following is a 73-amino-acid chain: Beta-defensin 39 (73 aa).

Residues 1–23 (MKISCFLLLVLSLSCFQINSVSG) form the signal peptide. 3 cysteine pairs are disulfide-bonded: Cys29–Cys58, Cys36–Cys51, and Cys41–Cys59.

This sequence belongs to the beta-defensin family.

It is found in the secreted. Functionally, has antibacterial activity. The chain is Beta-defensin 39 (Defb39) from Rattus norvegicus (Rat).